The chain runs to 233 residues: Glutathione S-transferase U15 (233 aa).

A GST N-terminal domain is found at E5–G85. Glutathione contacts are provided by residues S15–P16, S42–K43, K56–V57, and V69–S70. Residues H92 to F219 form the GST C-terminal domain. Residue T158 is modified to Phosphothreonine.

Belongs to the GST superfamily. Tau family.

The protein resides in the cytoplasm. The protein localises to the cytosol. It carries out the reaction RX + glutathione = an S-substituted glutathione + a halide anion + H(+). Its function is as follows. May be involved in the conjugation of reduced glutathione to a wide number of exogenous and endogenous hydrophobic electrophiles and have a detoxification role against certain herbicides. This is Glutathione S-transferase U15 (GSTU15) from Arabidopsis thaliana (Mouse-ear cress).